A 187-amino-acid polypeptide reads, in one-letter code: Elongation factor P (187 aa).

Belongs to the elongation factor P family.

It localises to the cytoplasm. The protein operates within protein biosynthesis; polypeptide chain elongation. In terms of biological role, involved in peptide bond synthesis. Stimulates efficient translation and peptide-bond synthesis on native or reconstituted 70S ribosomes in vitro. Probably functions indirectly by altering the affinity of the ribosome for aminoacyl-tRNA, thus increasing their reactivity as acceptors for peptidyl transferase. This chain is Elongation factor P, found in Mycolicibacterium vanbaalenii (strain DSM 7251 / JCM 13017 / BCRC 16820 / KCTC 9966 / NRRL B-24157 / PYR-1) (Mycobacterium vanbaalenii).